Consider the following 97-residue polypeptide: Small integral membrane protein 8 (97 aa).

Residues 1–24 form a disordered region; the sequence is MSSAPEPPTFKKEPPKEKDFQSPG. The segment covering 9 to 20 has biased composition (basic and acidic residues); that stretch reads TFKKEPPKEKDF. A helical membrane pass occupies residues 48–67; sequence PVMAFGLVTLSLCVAYIGYL.

Belongs to the SMIM8 family.

It is found in the membrane. This Pongo abelii (Sumatran orangutan) protein is Small integral membrane protein 8 (SMIM8).